The following is a 175-amino-acid chain: MGRTLESKKQIVEELKALLDQAEMALVIDYQGLTIKEMSDLRTRLGPSSGICKVTKNTLMRKAIDGDTSWSSLESLLNGTNAFVLVKGDVGGALKAVQAFQKETKKSKTKGGLFEGKLLSQDEIKAIANLPTKEVLMAQIAGALNSIATKMAVGINEVPSGLARSLKQHADSGEN.

The protein belongs to the universal ribosomal protein uL10 family. As to quaternary structure, part of the ribosomal stalk of the 50S ribosomal subunit. The N-terminus interacts with L11 and the large rRNA to form the base of the stalk. The C-terminus forms an elongated spine to which L12 dimers bind in a sequential fashion forming a multimeric L10(L12)X complex.

In terms of biological role, forms part of the ribosomal stalk, playing a central role in the interaction of the ribosome with GTP-bound translation factors. The chain is Large ribosomal subunit protein uL10 from Prochlorococcus marinus (strain MIT 9211).